A 250-amino-acid chain; its full sequence is Probable chemoreceptor glutamine deamidase CheD (250 aa).

Belongs to the CheD family.

The catalysed reaction is L-glutaminyl-[protein] + H2O = L-glutamyl-[protein] + NH4(+). Its function is as follows. Probably deamidates glutamine residues to glutamate on methyl-accepting chemotaxis receptors (MCPs), playing an important role in chemotaxis. This is Probable chemoreceptor glutamine deamidase CheD from Paraburkholderia xenovorans (strain LB400).